Reading from the N-terminus, the 121-residue chain is Small ribosomal subunit protein uS13 (121 aa).

Positions 93 to 121 (RGLPVRGQNTKNNARTRKGPRRTVANKKK) are disordered. Residues 106–121 (ARTRKGPRRTVANKKK) are compositionally biased toward basic residues.

This sequence belongs to the universal ribosomal protein uS13 family. In terms of assembly, part of the 30S ribosomal subunit. Forms a loose heterodimer with protein S19. Forms two bridges to the 50S subunit in the 70S ribosome.

Functionally, located at the top of the head of the 30S subunit, it contacts several helices of the 16S rRNA. In the 70S ribosome it contacts the 23S rRNA (bridge B1a) and protein L5 of the 50S subunit (bridge B1b), connecting the 2 subunits; these bridges are implicated in subunit movement. Contacts the tRNAs in the A and P-sites. The polypeptide is Small ribosomal subunit protein uS13 (Bacillus licheniformis (strain ATCC 14580 / DSM 13 / JCM 2505 / CCUG 7422 / NBRC 12200 / NCIMB 9375 / NCTC 10341 / NRRL NRS-1264 / Gibson 46)).